Reading from the N-terminus, the 141-residue chain is Nucleoside diphosphate kinase (141 aa).

The ATP site is built by lysine 11, phenylalanine 59, arginine 87, threonine 93, arginine 104, and asparagine 114. Residue histidine 117 is the Pros-phosphohistidine intermediate of the active site.

The protein belongs to the NDK family. As to quaternary structure, homotetramer. Mg(2+) is required as a cofactor.

It is found in the cytoplasm. It catalyses the reaction a 2'-deoxyribonucleoside 5'-diphosphate + ATP = a 2'-deoxyribonucleoside 5'-triphosphate + ADP. The enzyme catalyses a ribonucleoside 5'-diphosphate + ATP = a ribonucleoside 5'-triphosphate + ADP. Functionally, major role in the synthesis of nucleoside triphosphates other than ATP. The ATP gamma phosphate is transferred to the NDP beta phosphate via a ping-pong mechanism, using a phosphorylated active-site intermediate. The polypeptide is Nucleoside diphosphate kinase (Verminephrobacter eiseniae (strain EF01-2)).